A 357-amino-acid polypeptide reads, in one-letter code: DENN domain-containing protein 10 (357 aa).

The region spanning 1 to 140 (MAAAEVADTQ…TKGICQSEEN (140 aa)) is the uDENN domain. Positions 165-299 (QFGMETVILH…PEKSESHVIQ (135 aa)) constitute a cDENN domain. Residues 301 to 357 (IALKTREIFTNLAPFSEVSADGEKRVLNLEALKQKRFPPATENFLYHLAAAEQMLKI) enclose the dDENN domain.

Belongs to the DENND10 family. As to quaternary structure, interacts with the coiled-coil heterodimer of CCDC22 and CCDC93; the interaction is direct. Interacts with RAB27A and RAB27B (GDP-bound forms preferentially).

Its subcellular location is the late endosome. In terms of biological role, guanine nucleotide exchange factor (GEF) regulating homeostasis of late endocytic pathway, including endosomal positioning, maturation and secretion, possibly through activating Rab proteins such as RAB27A and RAB27B. Promotes the exchange of GDP to GTP, converting inactive GDP-bound RAB27A and RAB27B into their active GTP-bound form. The sequence is that of DENN domain-containing protein 10 from Homo sapiens (Human).